The chain runs to 495 residues: Homeobox protein ceh-21 (495 aa).

The segment covering 1-14 has biased composition (polar residues); it reads MSQQFQASSGTGSA. Disordered regions lie at residues 1–24 and 89–267; these read MSQQ…TEHE and TAES…PGGE. Over residues 106–120 the composition is skewed to basic and acidic residues; that stretch reads LEEKSDKSSDGDGTS. The span at 132–145 shows a compositional bias: acidic residues; it reads NETEEDHEEKEDEA. Positions 149-162 are enriched in basic and acidic residues; it reads SRRESTRLKRKLLE. 2 stretches are compositionally biased toward polar residues: residues 163–179 and 199–217; these read SQKT…ASSK and TPEQ…TVRA. A compositionally biased stretch (low complexity) spans 218 to 233; it reads SSTCGSSVSSTSTVSS. Basic and acidic residues predominate over residues 242 to 254; sequence RATETPKLEELAP. A DNA-binding region (CUT) is located at residues 284-370; the sequence is NAQIGDDEEL…VRRALCFLPK (87 aa). Residues 389–449 constitute a DNA-binding region (homeobox); that stretch reads KTVKVIRLTF…MNSRRRLRID (61 aa). Residues 450–473 form a disordered region; it reads QQISRSSRSTGNGADTEDELDEED. Residues 464–473 show a composition bias toward acidic residues; the sequence is DTEDELDEED.

The protein belongs to the CUT homeobox family.

It localises to the nucleus. Probable DNA-binding regulatory protein involved in cell-fate specification. In Caenorhabditis elegans, this protein is Homeobox protein ceh-21 (ceh-21).